The sequence spans 171 residues: Peptide methionine sulfoxide reductase MsrA (171 aa).

Cys-12 is a catalytic residue.

It belongs to the MsrA Met sulfoxide reductase family.

The catalysed reaction is L-methionyl-[protein] + [thioredoxin]-disulfide + H2O = L-methionyl-(S)-S-oxide-[protein] + [thioredoxin]-dithiol. It carries out the reaction [thioredoxin]-disulfide + L-methionine + H2O = L-methionine (S)-S-oxide + [thioredoxin]-dithiol. Has an important function as a repair enzyme for proteins that have been inactivated by oxidation. Catalyzes the reversible oxidation-reduction of methionine sulfoxide in proteins to methionine. The chain is Peptide methionine sulfoxide reductase MsrA from Leuconostoc mesenteroides subsp. mesenteroides (strain ATCC 8293 / DSM 20343 / BCRC 11652 / CCM 1803 / JCM 6124 / NCDO 523 / NBRC 100496 / NCIMB 8023 / NCTC 12954 / NRRL B-1118 / 37Y).